The following is a 913-amino-acid chain: Vacuolar membrane protease (913 aa).

At 1 to 15 (MMANYFRSTFKFRKT) the chain is on the cytoplasmic side. A helical transmembrane segment spans residues 16 to 36 (TVSTLFVLTVLVISILTWFDA). The Vacuolar portion of the chain corresponds to 37-364 (NKYKSNLPDD…FFVVSARQLY (328 aa)). Residue Asn-117 is glycosylated (N-linked (GlcNAc...) asparagine). The Zn(2+) site is built by His-152 and Asp-164. Glu-196 functions as the Proton acceptor in the catalytic mechanism. Residues Glu-197, Glu-222, and His-296 each coordinate Zn(2+). Residues 365 to 385 (VWNIVLLCVLPITLILLRIVC) traverse the membrane as a helical segment. The Cytoplasmic portion of the chain corresponds to 386-394 (NKLGTWRMP). A helical transmembrane segment spans residues 395–415 (TSALFTRIPFALFVSSFTIYF). Residues 416-431 (TKELLLQLNPTIWSRN) lie on the Vacuolar side of the membrane. Residues 432–452 (FILPFLFCISEFLLINTLVLA) traverse the membrane as a helical segment. Topologically, residues 453–465 (LFEYLWPIQDFKT) are cytoplasmic. Residues 466 to 486 (LSLLELSAIAWLFLLKCTWDL) traverse the membrane as a helical segment. At 487 to 494 (SSSGFKAT) the chain is on the vacuolar side. Residues 495 to 515 (GVYPVTVFYLFISLASMFGLC) traverse the membrane as a helical segment. At 516-600 (SMCFGKRPNA…TLNYDWSAQY (85 aa)) the chain is on the cytoplasmic side. The segment covering 540–552 (NDTHSIECPRQPE) has biased composition (basic and acidic residues). The interval 540 to 578 (NDTHSIECPRQPEDSETTETSPLINTPSSSVQSSPIASS) is disordered. The segment covering 557-566 (TETSPLINTP) has biased composition (polar residues). Low complexity predominate over residues 567-578 (SSSVQSSPIASS). The helical transmembrane segment at 601–621 (LLAVPINAFLIWESLFNLFDA) threads the bilayer. Topologically, residues 622 to 634 (LSMTVQESNKATE) are vacuolar. A helical transmembrane segment spans residues 635–655 (AVFKFAIYGAIFLCSPLLPFT). Topologically, residues 656-660 (TKLNR) are cytoplasmic. Residues 661–681 (FVVIILGVVTILAASFSLFAA) traverse the membrane as a helical segment. Residues 682 to 913 (PYTELAPLKL…MVTIHKYLEL (232 aa)) are Vacuolar-facing. Residues Asn-729, Asn-794, and Asn-810 are each glycosylated (N-linked (GlcNAc...) asparagine).

The protein belongs to the peptidase M28 family. It depends on Zn(2+) as a cofactor.

It is found in the vacuole membrane. Its function is as follows. May be involved in vacuolar sorting and osmoregulation. The polypeptide is Vacuolar membrane protease (Kluyveromyces lactis (strain ATCC 8585 / CBS 2359 / DSM 70799 / NBRC 1267 / NRRL Y-1140 / WM37) (Yeast)).